We begin with the raw amino-acid sequence, 251 residues long: Prolactin-7B1 (251 aa).

The first 29 residues, 1 to 29 (MNTSLTQLCFWALQILLMSNLLLWEDVVS), serve as a signal peptide directing secretion. 2 N-linked (GlcNAc...) asparagine glycosylation sites follow: N2 and N73. Cystine bridges form between C100–C216 and C233–C241.

It belongs to the somatotropin/prolactin family. As to expression, expression restricted to placenta. Abundantly expressed in trophoblast cells of the junctional zone and trophoblasts migrating into the mesometrial decidua.

It is found in the secreted. This Mus musculus (Mouse) protein is Prolactin-7B1 (Prl7b1).